Here is a 61-residue protein sequence, read N- to C-terminus: Large ribosomal subunit protein bL32 (61 aa).

Residues 1–22 (MAVPKKKTSKSRRDMRRSHHAL) show a composition bias toward basic residues. Positions 1–27 (MAVPKKKTSKSRRDMRRSHHALKPSAY) are disordered.

This sequence belongs to the bacterial ribosomal protein bL32 family.

The chain is Large ribosomal subunit protein bL32 from Rhodospirillum rubrum (strain ATCC 11170 / ATH 1.1.1 / DSM 467 / LMG 4362 / NCIMB 8255 / S1).